The sequence spans 65 residues: Conotoxin tx3c (65 aa).

An N-terminal signal peptide occupies residues 1–19; it reads MFKLGVLLTICLLLFSLNA. A propeptide spanning residues 20–50 is cleaved from the precursor; the sequence is VPLDGDQPADQPAERLLDDISFENNPFYDPA. 3 disulfide bridges follow: C53–C64, C54–C60, and C57–C63. Position 62 is a 4-hydroxyproline; partial (P62). Position 64 is a cysteine amide (C64).

The hydroxylation at Pro-62 is observed in PubMed:15924437, PubMed:19380747 and PubMed:22709442, and the non-hydroxylation is described in PubMed:22709442. Expressed by the venom duct.

It is found in the secreted. Functionally, causes scratching in mice. This Conus textile (Cloth-of-gold cone) protein is Conotoxin tx3c.